We begin with the raw amino-acid sequence, 123 residues long: Small ribosomal subunit protein uS12 (123 aa).

A 3-methylthioaspartic acid modification is found at Asp-89. The disordered stretch occupies residues 101-123; that stretch reads SLDTAGVKDRKQSRSKYGAKRPK. Residues 113–123 are compositionally biased toward basic residues; sequence SRSKYGAKRPK.

The protein belongs to the universal ribosomal protein uS12 family. As to quaternary structure, part of the 30S ribosomal subunit. Contacts proteins S8 and S17. May interact with IF1 in the 30S initiation complex.

Functionally, with S4 and S5 plays an important role in translational accuracy. Interacts with and stabilizes bases of the 16S rRNA that are involved in tRNA selection in the A site and with the mRNA backbone. Located at the interface of the 30S and 50S subunits, it traverses the body of the 30S subunit contacting proteins on the other side and probably holding the rRNA structure together. The combined cluster of proteins S8, S12 and S17 appears to hold together the shoulder and platform of the 30S subunit. This Laribacter hongkongensis (strain HLHK9) protein is Small ribosomal subunit protein uS12.